The sequence spans 330 residues: Phosphate acyltransferase (330 aa).

It belongs to the PlsX family. Homodimer. Probably interacts with PlsY.

Its subcellular location is the cytoplasm. It carries out the reaction a fatty acyl-[ACP] + phosphate = an acyl phosphate + holo-[ACP]. It participates in lipid metabolism; phospholipid metabolism. Catalyzes the reversible formation of acyl-phosphate (acyl-PO(4)) from acyl-[acyl-carrier-protein] (acyl-ACP). This enzyme utilizes acyl-ACP as fatty acyl donor, but not acyl-CoA. This chain is Phosphate acyltransferase, found in Lysinibacillus sphaericus (strain C3-41).